Consider the following 350-residue polypeptide: uncharacterized protein (350 aa).

The first 27 residues, 1-27 (MKNKKRVLIASSLSCAILLLSAATTQA), serve as a signal peptide directing secretion. The disordered stretch occupies residues 28–71 (NSAHKDSQDQNKKEHVDKSQQKEKRNVTNKDKNSTVPDDIGKNG). Positions 30–60 (AHKDSQDQNKKEHVDKSQQKEKRNVTNKDKN) are enriched in basic and acidic residues.

The protein belongs to the aerolysin family.

This is an uncharacterized protein from Staphylococcus aureus (strain MSSA476).